A 659-amino-acid polypeptide reads, in one-letter code: Threonine--tRNA ligase (659 aa).

Residues 7-70 (VQATVTVTFP…TDDATVEIIT (64 aa)) enclose the TGS domain. The segment at 255 to 557 (DHRKLGAELE…LIEHTAGNFP (303 aa)) is catalytic. Residues Cys353, His404, and His534 each contribute to the Zn(2+) site.

This sequence belongs to the class-II aminoacyl-tRNA synthetase family. In terms of assembly, homodimer. Zn(2+) is required as a cofactor.

The protein resides in the cytoplasm. It carries out the reaction tRNA(Thr) + L-threonine + ATP = L-threonyl-tRNA(Thr) + AMP + diphosphate + H(+). Catalyzes the attachment of threonine to tRNA(Thr) in a two-step reaction: L-threonine is first activated by ATP to form Thr-AMP and then transferred to the acceptor end of tRNA(Thr). Also edits incorrectly charged L-seryl-tRNA(Thr). This is Threonine--tRNA ligase from Chlorobium phaeobacteroides (strain BS1).